The chain runs to 110 residues: UPF0122 protein BCA_3946 (110 aa).

This sequence belongs to the UPF0122 family.

Its function is as follows. Might take part in the signal recognition particle (SRP) pathway. This is inferred from the conservation of its genetic proximity to ftsY/ffh. May be a regulatory protein. The polypeptide is UPF0122 protein BCA_3946 (Bacillus cereus (strain 03BB102)).